The sequence spans 386 residues: Protein phosphatase methylesterase 1 (386 aa).

Residues 20-48 are disordered; sequence ILEKLKGGQEPNSNEEGSDSIGDLPSLKN. Catalysis depends on residues Ser-194, Asp-222, and His-348.

It belongs to the AB hydrolase superfamily.

It catalyses the reaction [phosphatase 2A protein]-C-terminal L-leucine methyl ester + H2O = [phosphatase 2A protein]-C-terminal L-leucine + methanol + H(+). Demethylates proteins that have been reversibly carboxymethylated. Demethylates the phosphatase PP2A catalytic subunit. This is Protein phosphatase methylesterase 1 (PPE1) from Candida glabrata (strain ATCC 2001 / BCRC 20586 / JCM 3761 / NBRC 0622 / NRRL Y-65 / CBS 138) (Yeast).